The primary structure comprises 275 residues: Tryptophan synthase alpha chain (275 aa).

Catalysis depends on proton acceptor residues Glu60 and Asp71.

This sequence belongs to the TrpA family. As to quaternary structure, tetramer of two alpha and two beta chains.

It carries out the reaction (1S,2R)-1-C-(indol-3-yl)glycerol 3-phosphate + L-serine = D-glyceraldehyde 3-phosphate + L-tryptophan + H2O. The protein operates within amino-acid biosynthesis; L-tryptophan biosynthesis; L-tryptophan from chorismate: step 5/5. Its function is as follows. The alpha subunit is responsible for the aldol cleavage of indoleglycerol phosphate to indole and glyceraldehyde 3-phosphate. This Prochlorococcus marinus (strain MIT 9313) protein is Tryptophan synthase alpha chain.